The chain runs to 139 residues: Large ribosomal subunit protein uL16 (139 aa).

This sequence belongs to the universal ribosomal protein uL16 family. In terms of assembly, part of the 50S ribosomal subunit.

In terms of biological role, binds 23S rRNA and is also seen to make contacts with the A and possibly P site tRNAs. This Gloeothece citriformis (strain PCC 7424) (Cyanothece sp. (strain PCC 7424)) protein is Large ribosomal subunit protein uL16.